Reading from the N-terminus, the 125-residue chain is Allatostatin (125 aa).

Positions 1 to 26 are cleaved as a signal peptide; sequence MKTSAYNVYLGVVAAMLALLFVTINA. Residues 27–106 constitute a propeptide that is removed on maturation; the sequence is APMEADDETA…SRLARQWRAD (80 aa). A Pyrrolidone carboxylic acid modification is found at Q109.

It belongs to the allatostatin family.

It localises to the secreted. Functionally, strongly inhibits juvenile hormone biosynthesis in vitro by the corpora allata from fifth-stadium larvae and adult females. This is Allatostatin from Spodoptera frugiperda (Fall armyworm).